Here is a 223-residue protein sequence, read N- to C-terminus: 7-cyano-7-deazaguanine synthase (223 aa).

15 to 25 (FSGGQDSTTCL) is a binding site for ATP. Zn(2+) is bound by residues cysteine 191, cysteine 200, cysteine 203, and cysteine 206.

Belongs to the QueC family. Homodimer. It depends on Zn(2+) as a cofactor.

It catalyses the reaction 7-carboxy-7-deazaguanine + NH4(+) + ATP = 7-cyano-7-deazaguanine + ADP + phosphate + H2O + H(+). Its pathway is purine metabolism; 7-cyano-7-deazaguanine biosynthesis. Catalyzes the ATP-dependent conversion of 7-carboxy-7-deazaguanine (CDG) to 7-cyano-7-deazaguanine (preQ(0)). In Staphylococcus haemolyticus (strain JCSC1435), this protein is 7-cyano-7-deazaguanine synthase.